The following is a 591-amino-acid chain: Aspartate--tRNA(Asp/Asn) ligase (591 aa).

Residue E175 coordinates L-aspartate. The segment at 199–202 is aspartate; it reads QQFK. Positions 221 and 453 each coordinate L-aspartate. 221-223 is a binding site for ATP; sequence RDE. Position 486 (E486) interacts with ATP. Position 493 (R493) interacts with L-aspartate. 538–541 provides a ligand contact to ATP; that stretch reads GIDR.

This sequence belongs to the class-II aminoacyl-tRNA synthetase family. Type 1 subfamily. As to quaternary structure, homodimer.

The protein resides in the cytoplasm. The catalysed reaction is tRNA(Asx) + L-aspartate + ATP = L-aspartyl-tRNA(Asx) + AMP + diphosphate. Functionally, aspartyl-tRNA synthetase with relaxed tRNA specificity since it is able to aspartylate not only its cognate tRNA(Asp) but also tRNA(Asn). Reaction proceeds in two steps: L-aspartate is first activated by ATP to form Asp-AMP and then transferred to the acceptor end of tRNA(Asp/Asn). This Jannaschia sp. (strain CCS1) protein is Aspartate--tRNA(Asp/Asn) ligase.